The sequence spans 222 residues: Eukaryotic translation initiation factor 3 subunit K (222 aa).

The region spanning 46 to 208 (YDLEANLAVL…KIKTKNITEK (163 aa)) is the PCI domain.

It belongs to the eIF-3 subunit K family. Component of the eukaryotic translation initiation factor 3 (eIF-3) complex. The eIF-3 complex interacts with pix.

The protein localises to the cytoplasm. Functionally, component of the eukaryotic translation initiation factor 3 (eIF-3) complex, which is involved in protein synthesis of a specialized repertoire of mRNAs and, together with other initiation factors, stimulates binding of mRNA and methionyl-tRNAi to the 40S ribosome. The eIF-3 complex specifically targets and initiates translation of a subset of mRNAs involved in cell proliferation. The polypeptide is Eukaryotic translation initiation factor 3 subunit K (Drosophila willistoni (Fruit fly)).